Consider the following 430-residue polypeptide: Adenylosuccinate synthetase (430 aa).

Residues G12 to K18 and G40 to T42 contribute to the GTP site. D13 acts as the Proton acceptor in catalysis. Residues D13 and G40 each contribute to the Mg(2+) site. IMP contacts are provided by residues D13 to K16, N38 to H41, T130, R144, Q224, T239, and R303. The active-site Proton donor is the H41. A substrate-binding site is contributed by T299–R305. Residues R305, K331–D333, and S413–S415 each bind GTP.

The protein belongs to the adenylosuccinate synthetase family. Homodimer. Mg(2+) serves as cofactor.

Its subcellular location is the cytoplasm. The enzyme catalyses IMP + L-aspartate + GTP = N(6)-(1,2-dicarboxyethyl)-AMP + GDP + phosphate + 2 H(+). The protein operates within purine metabolism; AMP biosynthesis via de novo pathway; AMP from IMP: step 1/2. Plays an important role in the de novo pathway of purine nucleotide biosynthesis. Catalyzes the first committed step in the biosynthesis of AMP from IMP. This is Adenylosuccinate synthetase from Parvibaculum lavamentivorans (strain DS-1 / DSM 13023 / NCIMB 13966).